The following is a 476-amino-acid chain: mRNA-capping enzyme subunit beta (476 aa).

Residues 1–133 (MNVGSILNDE…KLKSTNKPRR (133 aa)) are disordered. 2 stretches are compositionally biased toward basic and acidic residues: residues 51–67 (LKTK…EHSN) and 105–114 (HPIEQDKSEK). Over residues 123–132 (SKLKSTNKPR) the composition is skewed to basic residues.

This sequence belongs to the fungal TPase family. In terms of assembly, heterodimer. The mRNA-capping enzyme is composed of two separate chains alpha and beta, respectively a mRNA guanylyltransferase and an mRNA 5'-triphosphate monophosphatase. It depends on Mg(2+) as a cofactor.

It localises to the nucleus. The enzyme catalyses a 5'-end triphospho-ribonucleoside in mRNA + H2O = a 5'-end diphospho-ribonucleoside in mRNA + phosphate + H(+). Its function is as follows. First step of mRNA capping. Converts the 5'-triphosphate end of a nascent mRNA chain into a diphosphate end. This chain is mRNA-capping enzyme subunit beta (CET1), found in Debaryomyces hansenii (strain ATCC 36239 / CBS 767 / BCRC 21394 / JCM 1990 / NBRC 0083 / IGC 2968) (Yeast).